The primary structure comprises 86 residues: Phosphocarrier protein HPr (86 aa).

Residues 1-86 (MVKKEAIIKA…LAELIESFKE (86 aa)) enclose the HPr domain. The Pros-phosphohistidine intermediate role is filled by histidine 15.

The protein belongs to the HPr family.

It localises to the cytoplasm. Functionally, general (non sugar-specific) component of the phosphoenolpyruvate-dependent sugar phosphotransferase system (sugar PTS). This major carbohydrate active-transport system catalyzes the phosphorylation of incoming sugar substrates concomitantly with their translocation across the cell membrane. The phosphoryl group from phosphoenolpyruvate (PEP) is transferred to the phosphoryl carrier protein HPr by enzyme I. Phospho-HPr then transfers it to the PTS EIIA domain. This Borreliella burgdorferi (strain ATCC 35210 / DSM 4680 / CIP 102532 / B31) (Borrelia burgdorferi) protein is Phosphocarrier protein HPr (ptsH).